The primary structure comprises 396 residues: ATP phosphoribosyltransferase regulatory subunit (396 aa).

Belongs to the class-II aminoacyl-tRNA synthetase family. HisZ subfamily. As to quaternary structure, heteromultimer composed of HisG and HisZ subunits.

The protein resides in the cytoplasm. Its pathway is amino-acid biosynthesis; L-histidine biosynthesis; L-histidine from 5-phospho-alpha-D-ribose 1-diphosphate: step 1/9. Its function is as follows. Required for the first step of histidine biosynthesis. May allow the feedback regulation of ATP phosphoribosyltransferase activity by histidine. The chain is ATP phosphoribosyltransferase regulatory subunit from Alkaliphilus metalliredigens (strain QYMF).